We begin with the raw amino-acid sequence, 98 residues long: NADH-ubiquinone oxidoreductase chain 4L (98 aa).

The next 3 helical transmembrane spans lie at M1 to I21, L30 to I50, and I61 to I81.

The protein belongs to the complex I subunit 4L family. As to quaternary structure, core subunit of respiratory chain NADH dehydrogenase (Complex I) which is composed of 45 different subunits.

It is found in the mitochondrion inner membrane. The catalysed reaction is a ubiquinone + NADH + 5 H(+)(in) = a ubiquinol + NAD(+) + 4 H(+)(out). In terms of biological role, core subunit of the mitochondrial membrane respiratory chain NADH dehydrogenase (Complex I) which catalyzes electron transfer from NADH through the respiratory chain, using ubiquinone as an electron acceptor. Part of the enzyme membrane arm which is embedded in the lipid bilayer and involved in proton translocation. This chain is NADH-ubiquinone oxidoreductase chain 4L (MT-ND4L), found in Neovison vison (American mink).